We begin with the raw amino-acid sequence, 202 residues long: Putative transposon Tn552 DNA-invertase bin3 (202 aa).

A Resolvase/invertase-type recombinase catalytic domain is found at 1-143 (MIIGYARVSS…QGIQVAKEKG (143 aa)). The active-site O-(5'-phospho-DNA)-serine intermediate is the Ser-9.

This sequence belongs to the site-specific recombinase resolvase family.

In terms of biological role, potential DNA invertase. This chain is Putative transposon Tn552 DNA-invertase bin3 (bin3), found in Staphylococcus aureus.